A 292-amino-acid chain; its full sequence is MASITELIKQLRASTQAGFMDCKKALEATNNDIDQAIKWLRENGIAKAAKKVDNVASEGVIKLKLADQKATILEINSQTDFVTKNDQFVAFSNELVDLVHKHETTDVAKIEQLKLASGSTVAETQIHLTAIIGEKISLRRVAFVKEEANSSLATYLHSNSRIGVIVKTSKTDDKEFLKHLAMHIAASNPKFVSQKDVSADFIAKEREIAAAQAQSENKPKEFIDRIVDGRINKVLEEVCLVNQKFLVNQEQTVQQAAQAKKVEILSFIRYEVGEGIEKQVSNFADEVKAQMK.

The tract at residues 79–82 (TDFV) is involved in Mg(2+) ion dislocation from EF-Tu.

This sequence belongs to the EF-Ts family.

It is found in the cytoplasm. In terms of biological role, associates with the EF-Tu.GDP complex and induces the exchange of GDP to GTP. It remains bound to the aminoacyl-tRNA.EF-Tu.GTP complex up to the GTP hydrolysis stage on the ribosome. In Mycoplasmoides gallisepticum (strain R(low / passage 15 / clone 2)) (Mycoplasma gallisepticum), this protein is Elongation factor Ts.